Reading from the N-terminus, the 405-residue chain is 11-beta-hydroxysteroid dehydrogenase type 2 (405 aa).

82–111 is an NAD(+) binding site; it reads TRAVLITGCDSGFGKETAKKLDSMGFTVLA. Residue serine 219 participates in substrate binding. The active-site Proton acceptor is the tyrosine 232. Positions 335-339 are essential for protein stability; that stretch reads RRRYY. Residues 377–387 are compositionally biased toward low complexity; that stretch reads QPGQPGTTPPQ. Residues 377–405 are disordered; the sequence is QPGQPGTTPPQDAAQDPNLSPGPSPAVAR. Pro residues predominate over residues 396-405; the sequence is SPGPSPAVAR.

It belongs to the short-chain dehydrogenases/reductases (SDR) family. Interacts with ligand-free cytoplasmic NR3C2. In terms of tissue distribution, expressed in kidney, placenta, pancreas, prostate, ovary, small intestine and colon, and in lower levels in the spleen and testis. At midgestation, expressed at high levels in placenta and in fetal kidney and, at much lower levels, in fetal lung and testis.

The protein resides in the microsome. Its subcellular location is the endoplasmic reticulum. It carries out the reaction an 11beta-hydroxysteroid + NAD(+) = an 11-oxosteroid + NADH + H(+). The catalysed reaction is cortisol + NAD(+) = cortisone + NADH + H(+). It catalyses the reaction corticosterone + NAD(+) = 11-dehydrocorticosterone + NADH + H(+). The enzyme catalyses 11beta,17beta-dihydroxyandrost-4-ene-3-one + NAD(+) = 17beta-hydroxyandrost-4-ene-3,11-dione + NADH + H(+). It carries out the reaction 11beta-hydroxyandrost-4-ene-3,17-dione + NAD(+) = androst-4-ene-3,11,17-trione + NADH + H(+). The protein operates within steroid metabolism. With respect to regulation, inhibited by glycyrrhetinic acid (derived from liquorice). Catalyzes the conversion of biologically active 11beta-hydroxyglucocorticoids (11beta-hydroxysteroid) such as cortisol, to inactive 11-ketoglucocorticoids (11-oxosteroid) such as cortisone, in the presence of NAD(+). Functions as a dehydrogenase (oxidase), thereby decreasing the concentration of active glucocorticoids, thus protecting the nonselective mineralocorticoid receptor from occupation by glucocorticoids. Plays an important role in maintaining glucocorticoids balance during preimplantation and protects the fetus from excessive maternal corticosterone exposure. Catalyzes the oxidation of 11beta-hydroxytestosterone (11beta,17beta-dihydroxyandrost-4-ene-3-one) to 11-ketotestosterone (17beta-hydroxyandrost-4-ene-3,11-dione), a major bioactive androgen. Catalyzes the conversion of 11beta-hydroxyandrostenedione (11beta-hydroxyandrost-4-ene-3,17-dione) to 11-ketoandrostenedione (androst-4-ene-3,11,17-trione), which can be further metabolized to 11-ketotestosterone. Converts 7-beta-25-dihydroxycholesterol to 7-oxo-25-hydroxycholesterol in vitro. 7-beta-25-dihydroxycholesterol (not 7-oxo-25-hydroxycholesterol) acts as a ligand for the G-protein-coupled receptor (GPCR) Epstein-Barr virus-induced gene 2 (EBI2) and may thereby regulate immune cell migration. May protect ovulating oocytes and fertilizing spermatozoa from the adverse effects of cortisol. This chain is 11-beta-hydroxysteroid dehydrogenase type 2, found in Homo sapiens (Human).